Reading from the N-terminus, the 238-residue chain is Ribonuclease PH (238 aa).

Residues arginine 86 and 124-126 (GTR) each bind phosphate.

It belongs to the RNase PH family. As to quaternary structure, homohexameric ring arranged as a trimer of dimers.

It carries out the reaction tRNA(n+1) + phosphate = tRNA(n) + a ribonucleoside 5'-diphosphate. Phosphorolytic 3'-5' exoribonuclease that plays an important role in tRNA 3'-end maturation. Removes nucleotide residues following the 3'-CCA terminus of tRNAs; can also add nucleotides to the ends of RNA molecules by using nucleoside diphosphates as substrates, but this may not be physiologically important. Probably plays a role in initiation of 16S rRNA degradation (leading to ribosome degradation) during starvation. This Histophilus somni (strain 129Pt) (Haemophilus somnus) protein is Ribonuclease PH.